The sequence spans 201 residues: Recombination protein RecR (201 aa).

A C4-type zinc finger spans residues Cys-60–Cys-75. Residues Gly-83–Pro-178 form the Toprim domain.

It belongs to the RecR family.

May play a role in DNA repair. It seems to be involved in an RecBC-independent recombinational process of DNA repair. It may act with RecF and RecO. This is Recombination protein RecR from Hyphomonas neptunium (strain ATCC 15444).